An 89-amino-acid chain; its full sequence is Large ribosomal subunit protein bL27 (89 aa).

Positions 1 to 23 (MAHKKAGGSSRNGRDSHSKRLGV) are disordered.

This sequence belongs to the bacterial ribosomal protein bL27 family.

The polypeptide is Large ribosomal subunit protein bL27 (Mesorhizobium japonicum (strain LMG 29417 / CECT 9101 / MAFF 303099) (Mesorhizobium loti (strain MAFF 303099))).